The chain runs to 159 residues: S-ribosylhomocysteine lyase (159 aa).

Histidine 53, histidine 57, and cysteine 124 together coordinate Fe cation.

Belongs to the LuxS family. As to quaternary structure, homodimer. Fe cation serves as cofactor.

The catalysed reaction is S-(5-deoxy-D-ribos-5-yl)-L-homocysteine = (S)-4,5-dihydroxypentane-2,3-dione + L-homocysteine. Involved in the synthesis of autoinducer 2 (AI-2) which is secreted by bacteria and is used to communicate both the cell density and the metabolic potential of the environment. The regulation of gene expression in response to changes in cell density is called quorum sensing. Catalyzes the transformation of S-ribosylhomocysteine (RHC) to homocysteine (HC) and 4,5-dihydroxy-2,3-pentadione (DPD). This is S-ribosylhomocysteine lyase from Porphyromonas gingivalis (strain ATCC 33277 / DSM 20709 / CIP 103683 / JCM 12257 / NCTC 11834 / 2561).